The following is a 516-amino-acid chain: Signal recognition particle protein (516 aa).

GTP-binding positions include 108 to 115, 191 to 195, and 249 to 252; these read GLQGAGKT, DTAGR, and TKID. The disordered stretch occupies residues 383-405; sequence MTPEERENPDLLTPSRRRRIASG.

It belongs to the GTP-binding SRP family. SRP54 subfamily. As to quaternary structure, part of the signal recognition particle protein translocation system, which is composed of SRP and FtsY.

It is found in the cytoplasm. It carries out the reaction GTP + H2O = GDP + phosphate + H(+). Functionally, involved in targeting and insertion of nascent membrane proteins into the cytoplasmic membrane. Binds to the hydrophobic signal sequence of the ribosome-nascent chain (RNC) as it emerges from the ribosomes. The SRP-RNC complex is then targeted to the cytoplasmic membrane where it interacts with the SRP receptor FtsY. This chain is Signal recognition particle protein, found in Streptococcus mutans serotype c (strain ATCC 700610 / UA159).